The sequence spans 619 residues: CREB-regulated transcription coactivator 3 (619 aa).

A phosphoserine mark is found at Ser-4 and Ser-62. Residues 129–148 form a disordered region; the sequence is SQHLDESWPRQQPPWKEEKH. Thr-160 carries the post-translational modification Phosphothreonine. Residue Ser-162 is modified to Phosphoserine; by SIK2. Residue Lys-232 forms a Glycyl lysine isopeptide (Lys-Gly) (interchain with G-Cter in SUMO2) linkage. 7 positions are modified to phosphoserine: Ser-273, Ser-329, Ser-332, Ser-370, Ser-391, Ser-396, and Ser-410. The tract at residues 375-478 is disordered; it reads STTNLSGPSR…TQQPQAAPSL (104 aa). Residues 380–401 are required for interaction with PPP2CA and PPP2R1A; that stretch reads SGPSRRRQPPVSPLTLSPGPEA. Polar residues-rich tracts occupy residues 405 to 415 and 422 to 431; these read FSRQLSATSPL and QMVTSEQSPL. Ser-443 is subject to Phosphoserine. Residues 443-454 are compositionally biased toward pro residues; the sequence is SPPPPYPTPQEL. Low complexity predominate over residues 455-478; it reads PQPLLQQPHAQEPPTQQPQAAPSL.

This sequence belongs to the TORC family. Binding, as a tetramer, through its N-terminal region, with the bZIP domain of CREB1 enhances recruitment of TAF4 to the promoter. 'Arg-314' in the bZIP domain of CREB1 is essential for this interaction. Interacts (when phosphorylated at Ser-162 and Se-273) with 14-3-3 proteins. Interacts with YWHAE. Interacts (when phosphorylated at Ser-391) with phosphatase PP2A catalytic subunit PPP2CA and regulatory subunits PPP2R1A and PPP2R2A. Post-translationally, phosphorylation/dephosphorylation states of Ser-273 are required for regulating transduction of CREB activity. CRTCs/TORCs are inactive when phosphorylated, and active when dephosphorylated at this site. May be phosphorylated at Ser-391 by MAPK3/ERK1 and/or MAPK1/ERK2 or by some cyclin-dependent kinases such as CDK1,CDK2 or CDK5. Following adenylyl cyclase activation, dephosphorylated at Ser-162 and Ser-273 resulting in its dissociation from 14-3-3 proteins probably promoting CRTC3 translocation into the nucleus. As to expression, expressed in brown adipose tissues.

Its subcellular location is the nucleus. It is found in the cytoplasm. Transcriptional coactivator for CREB1 which activates transcription through both consensus and variant cAMP response element (CRE) sites. Acts as a coactivator, in the SIK/TORC signaling pathway, being active when dephosphorylated. Acts independently of CREB1 'Ser-133' phosphorylation. Enhances the interaction of CREB1 with TAF4. Regulates the expression of specific CREB-activated genes such as the steroidogenic gene, StAR. Potent coactivator of PPARGC1A and inducer of mitochondrial biogenesis in muscle cells. The chain is CREB-regulated transcription coactivator 3 (Crtc3) from Mus musculus (Mouse).